Here is a 428-residue protein sequence, read N- to C-terminus: Probable anion transporter 6 (428 aa).

The first 22 residues, 1–22 (MKFPKRYAIVLLTFMCTNVCYI), serve as a signal peptide directing secretion. 11 consecutive transmembrane segments (helical) span residues 47–67 (MILS…GWAA), 74–94 (LVLL…PLDP), 98–118 (ILLV…FPSI), 137–157 (LTTS…PSLV), 164–184 (SVFS…FKFA), 221–241 (ILFS…HYAL), 269–289 (LPYL…DHLI), 301–321 (KLLN…LPLF), 327–347 (AIFC…GFAV), 356–376 (FAGI…IVGV), and 401–421 (TVFF…LIFS).

It belongs to the major facilitator superfamily. Sodium/anion cotransporter (TC 2.A.1.14) family.

The protein localises to the cell membrane. Its function is as follows. Probable anion transporter. This Oryza sativa subsp. japonica (Rice) protein is Probable anion transporter 6 (PHT4;6).